Consider the following 264-residue polypeptide: Apolipoprotein A-I (264 aa).

A signal peptide spans Met-1–Ala-18. A run of 2 repeats spans residues Leu-67 to Gly-88 and Pro-89 to Asn-110. The interval Leu-67–Gln-264 is 10 X approximate tandem repeats. Methionine sulfoxide is present on Met-109. A 3; half-length repeat occupies Lys-111 to Gln-121. 3 repeat units span residues Pro-122–Glu-143, Pro-144–Ser-165, and Pro-166–Ala-187. Residues Pro-188–Gly-207 form a 7; truncated repeat. Repeat unit 8 spans residues Ser-208–Lys-229. A 9; half-length repeat occupies Pro-230–Leu-240. Residues Pro-241 to Gln-264 form repeat 10.

This sequence belongs to the apolipoprotein A1/A4/E family. Homodimer. Interacts with APOA1BP and CLU. Component of a sperm activating protein complex (SPAP), consisting of APOA1, an immunoglobulin heavy chain, an immunoglobulin light chain and albumin. Interacts with NDRG1. Interacts with SCGB3A2. Interacts with NAXE and YJEFN3. Post-translationally, glycosylated. Palmitoylated. In terms of processing, phosphorylation sites are present in the extracellular medium.

It is found in the secreted. Participates in the reverse transport of cholesterol from tissues to the liver for excretion by promoting cholesterol efflux from tissues and by acting as a cofactor for the lecithin cholesterol acyltransferase (LCAT). As part of the SPAP complex, activates spermatozoa motility. This Ictidomys tridecemlineatus (Thirteen-lined ground squirrel) protein is Apolipoprotein A-I (APOA1).